A 246-amino-acid polypeptide reads, in one-letter code: High mobility group protein 1 (246 aa).

The segment at residues 106–179 is a DNA-binding region (HMG box); that stretch reads PKKPLTVFFA…NYQREKSKYL (74 aa). The tract at residues 179 to 246 is disordered; sequence LEAKKNGTLP…KKKDKSNSSI (68 aa). Positions 214–227 are enriched in basic and acidic residues; it reads PVEKRPHDDDGSSE. Residues 228–238 show a composition bias toward basic residues; it reads KKKKKKKKDKK.

In terms of assembly, interacts with FPR1. Interacts with an unidentified DNA helicase. Associates with rDNA.

It is found in the nucleus. Its subcellular location is the nucleolus. Functionally, DNA-binding protein that is probably part of the rDNA transcription apparatus. Acts synergetically with the RPA49 subunit of RNA polymerase I during rDNA transcription. May participate in mutagenesis control. This chain is High mobility group protein 1 (HMO1), found in Saccharomyces cerevisiae (strain ATCC 204508 / S288c) (Baker's yeast).